The chain runs to 286 residues: Undecaprenyl-diphosphatase (286 aa).

The next 7 helical transmembrane spans lie at 43-63, 91-111, 118-138, 150-170, 189-209, 236-256, and 264-284; these read FWKM…PIYF, LTII…KIIG, IIMG…DVMF, MSVG…VFPG, AAAL…ATCY, ITLA…VAWF, and GFVP…AWAL.

The protein belongs to the UppP family.

The protein localises to the cell inner membrane. The enzyme catalyses di-trans,octa-cis-undecaprenyl diphosphate + H2O = di-trans,octa-cis-undecaprenyl phosphate + phosphate + H(+). Catalyzes the dephosphorylation of undecaprenyl diphosphate (UPP). Confers resistance to bacitracin. This Koribacter versatilis (strain Ellin345) protein is Undecaprenyl-diphosphatase.